The following is a 127-amino-acid chain: NADPH-dependent 7-cyano-7-deazaguanine reductase (127 aa).

Cysteine 40 serves as the catalytic Thioimide intermediate. Aspartate 47 functions as the Proton donor in the catalytic mechanism. Residues valine 62–leucine 64 and histidine 81–glutamate 82 contribute to the substrate site.

The protein belongs to the GTP cyclohydrolase I family. QueF type 1 subfamily.

The protein resides in the cytoplasm. It carries out the reaction 7-aminomethyl-7-carbaguanine + 2 NADP(+) = 7-cyano-7-deazaguanine + 2 NADPH + 3 H(+). It participates in tRNA modification; tRNA-queuosine biosynthesis. Catalyzes the NADPH-dependent reduction of 7-cyano-7-deazaguanine (preQ0) to 7-aminomethyl-7-deazaguanine (preQ1). In Campylobacter jejuni subsp. jejuni serotype O:2 (strain ATCC 700819 / NCTC 11168), this protein is NADPH-dependent 7-cyano-7-deazaguanine reductase.